We begin with the raw amino-acid sequence, 202 residues long: MGNSKSGALSKEILEELQLNTKFTEEELCSWYQSFLKECPSGRITKQEFQSIYSKFFPEADPKAYAQHVFRSFDANSDGTLDFKEYVIALHMTSAGKTNQKLEWAFSLYDVDGNGAISKSEVLEIVMAIFKMISPEDVKQLPEDENTPEKRAEKIWGFFGKKDDDKLTEEEFIEGTLANKEILRLIQFEPRKVKEKLKEKKP.

Glycine 2 carries the N-myristoyl glycine lipid modification. A Cysteine sulfenic acid (-SOH) modification is found at cysteine 39. EF-hand domains lie at 41 to 59 (SGRI…FFPE), 61 to 96 (DPKA…TSAG), 97 to 132 (KTNQ…IFKM), and 147 to 182 (TPEK…NKEI). Aspartate 74, asparagine 76, aspartate 78, threonine 80, glutamate 85, aspartate 110, aspartate 112, asparagine 114, and glutamate 121 together coordinate Ca(2+). The tract at residues 189–192 (EPRK) is interaction with GRK1.

It belongs to the recoverin family. Homodimer; disulfide-linked. Homodimerization is caused by prolonged intense illumination. May form a complex composed of RHO, GRK1 and RCVRN in a Ca(2+)-dependent manner; RCVRN prevents the interaction between GRK1 and RHO. Interacts (via C-terminus) with GRK1 (via N-terminus); the interaction is Ca(2+)-dependent. In terms of processing, the N-terminal glycine is linked to one of four different types of acyl groups. The most abundant is myristoleate (14:1), but 14:0, 14:2, and 12:0 acyl residues are also present. The Ca(2+) induced exposure of the myristoyl group, known as the calcium-myristoyl switch, promotes RCVRN binding to the photoreceptor cell membranes only when intracellular Ca(2+) concentration is high. Oxidation on Cys-39 occurs in response to prolonged intense illumination and results in the formation of disulfide homodimers, and to a lesser extent disulfide-linked heterodimers.

Its subcellular location is the photoreceptor inner segment. It is found in the cell projection. The protein resides in the cilium. The protein localises to the photoreceptor outer segment. It localises to the photoreceptor outer segment membrane. Its subcellular location is the perikaryon. Its function is as follows. Acts as a calcium sensor and regulates phototransduction of cone and rod photoreceptor cells. Modulates light sensitivity of cone photoreceptor in dark and dim conditions. In response to high Ca(2+) levels induced by low light levels, prolongs RHO/rhodopsin activation in rod photoreceptor cells by binding to and inhibiting GRK1-mediated phosphorylation of RHO/rhodopsin. Plays a role in scotopic vision/enhances vision in dim light by enhancing signal transfer between rod photoreceptors and rod bipolar cells. Improves rod photoreceptor sensitivity in dim light and mediates response of rod photoreceptors to facilitate detection of change and motion in bright light. This Canis lupus familiaris (Dog) protein is Recoverin (RCVRN).